The primary structure comprises 540 residues: Membrane protein insertase YidC (540 aa).

Residues 6–26 (NILLIALALVSFLLFQQWQVA) traverse the membrane as a helical segment. Positions 36 to 47 (QAQSSSSLPAPS) are enriched in low complexity. The segment at 36 to 63 (QAQSSSSLPAPSFADELDPVPGQQQASA) is disordered. 4 consecutive transmembrane segments (helical) span residues 342-362 (AFIQ…TFIV), 417-437 (LGGC…YWAL), 455-475 (LSAQ…MFLI), and 496-516 (PVMF…YWLV).

It belongs to the OXA1/ALB3/YidC family. Type 1 subfamily. Interacts with the Sec translocase complex via SecD. Specifically interacts with transmembrane segments of nascent integral membrane proteins during membrane integration.

Its subcellular location is the cell inner membrane. Required for the insertion and/or proper folding and/or complex formation of integral membrane proteins into the membrane. Involved in integration of membrane proteins that insert both dependently and independently of the Sec translocase complex, as well as at least some lipoproteins. Aids folding of multispanning membrane proteins. This chain is Membrane protein insertase YidC, found in Vibrio parahaemolyticus serotype O3:K6 (strain RIMD 2210633).